Reading from the N-terminus, the 423-residue chain is Sorting nexin-4 (423 aa).

Residues 1–21 show a composition bias toward basic and acidic residues; that stretch reads MTDKGKNDLTSKAKDKARGNP. A disordered region spans residues 1–25; it reads MTDKGKNDLTSKAKDKARGNPEKPP. A PX domain is found at 29–157; the sequence is EIIVSDPQKR…TFLVSKDWES (129 aa). A 1,2-diacyl-sn-glycero-3-phospho-(1D-myo-inositol-3-phosphate) is bound by residues Arg-78, Ser-80, Lys-104, and Arg-123. Coiled coils occupy residues 217 to 252 and 346 to 381; these read KKND…AKLK and SRRE…ECLK.

The protein belongs to the sorting nexin family. Forms a complex with ATG20 and ATG17. Binds also to SNC1 and SNX41.

The protein resides in the cytoplasm. It is found in the cytosol. The protein localises to the preautophagosomal structure membrane. It localises to the endosome membrane. Sorting nexin, involved in the separation or division of vacuoles throughout the entire life cycle of the cells. Involved in retrieval of late-Golgi SNAREs from post-Golgi endosomes to the trans-Golgi network, for cytoplasm to vacuole transport (Cvt), and autophagy of large cargos including mitophagy, pexophagy and glycophagy. Involved in proper sorting of the v-SNARE protein SNC1. The sequence is that of Sorting nexin-4 from Saccharomyces cerevisiae (strain ATCC 204508 / S288c) (Baker's yeast).